Reading from the N-terminus, the 236-residue chain is uncharacterized protein (236 aa).

A DPCK domain is found at 3–208; that stretch reads ILGLTGSIAT…PSYFFTLLCL (206 aa). Position 8-15 (8-15) interacts with ATP; sequence GSIATGKS. Phosphoserine occurs at positions 82 and 86.

This sequence belongs to the CoaE family.

The protein resides in the cytoplasm. This is an uncharacterized protein from Schizosaccharomyces pombe (strain 972 / ATCC 24843) (Fission yeast).